The following is a 227-amino-acid chain: Uracil-DNA glycosylase (227 aa).

Asp68 functions as the Proton acceptor in the catalytic mechanism.

This sequence belongs to the uracil-DNA glycosylase (UDG) superfamily. UNG family.

It localises to the cytoplasm. The catalysed reaction is Hydrolyzes single-stranded DNA or mismatched double-stranded DNA and polynucleotides, releasing free uracil.. In terms of biological role, excises uracil residues from the DNA which can arise as a result of misincorporation of dUMP residues by DNA polymerase or due to deamination of cytosine. The protein is Uracil-DNA glycosylase of Mycolicibacterium smegmatis (strain ATCC 700084 / mc(2)155) (Mycobacterium smegmatis).